The sequence spans 195 residues: Small ribosomal subunit protein uS4B (195 aa).

Residues 107 to 181 enclose the S4 RNA-binding domain; it reads RRLQTQVYKL…VARRNAARKA (75 aa). Positions 161-195 are disordered; it reads TSPFGGARPGRVARRNAARKAEASGEAAEEAEDEE. Residue Lys-180 forms a Glycyl lysine isopeptide (Lys-Gly) (interchain with G-Cter in ubiquitin) linkage. A Phosphoserine modification is found at Ser-184.

This sequence belongs to the universal ribosomal protein uS4 family. As to quaternary structure, component of the small ribosomal subunit (SSU). Mature yeast ribosomes consist of a small (40S) and a large (60S) subunit. The 40S small subunit contains 1 molecule of ribosomal RNA (18S rRNA) and 33 different proteins (encoded by 57 genes). The large 60S subunit contains 3 rRNA molecules (25S, 5.8S and 5S rRNA) and 46 different proteins (encoded by 81 genes). Interacts with snoRNA U3. uS11 interacts with MPP10. Component of the ribosomal small subunit (SSU) processome composed of at least 40 protein subunits and snoRNA U3.

It localises to the cytoplasm. Its subcellular location is the nucleus. The protein localises to the nucleolus. Functionally, component of the ribosome, a large ribonucleoprotein complex responsible for the synthesis of proteins in the cell. The small ribosomal subunit (SSU) binds messenger RNAs (mRNAs) and translates the encoded message by selecting cognate aminoacyl-transfer RNA (tRNA) molecules. The large subunit (LSU) contains the ribosomal catalytic site termed the peptidyl transferase center (PTC), which catalyzes the formation of peptide bonds, thereby polymerizing the amino acids delivered by tRNAs into a polypeptide chain. The nascent polypeptides leave the ribosome through a tunnel in the LSU and interact with protein factors that function in enzymatic processing, targeting, and the membrane insertion of nascent chains at the exit of the ribosomal tunnel. uS4 is involved in nucleolar processing of pre-18S ribosomal RNA and ribosome assembly. This chain is Small ribosomal subunit protein uS4B, found in Saccharomyces cerevisiae (strain ATCC 204508 / S288c) (Baker's yeast).